A 595-amino-acid polypeptide reads, in one-letter code: Adenine deaminase 2 (595 aa).

The protein belongs to the metallo-dependent hydrolases superfamily. Adenine deaminase family. Mn(2+) serves as cofactor.

It carries out the reaction adenine + H2O + H(+) = hypoxanthine + NH4(+). This chain is Adenine deaminase 2, found in Rhizobium etli (strain ATCC 51251 / DSM 11541 / JCM 21823 / NBRC 15573 / CFN 42).